An 817-amino-acid chain; its full sequence is Coiled-coil domain-containing protein 175 (817 aa).

Coiled-coil stretches lie at residues 130-166 and 217-594; these read ILEI…ALGI and LQDA…KQEE. The interval 761-817 is disordered; the sequence is EEESPSSLSKEDLQKAGMKQKEEKTLRFSPSLHTRRDTLSRNCKMIKKRSRSPKNKP. Residues 769–786 show a composition bias toward basic and acidic residues; sequence SKEDLQKAGMKQKEEKTL. A compositionally biased stretch (basic residues) spans 804–817; it reads KMIKKRSRSPKNKP.

The chain is Coiled-coil domain-containing protein 175 (Ccdc175) from Rattus norvegicus (Rat).